The sequence spans 235 residues: Clathrin light chain A (235 aa).

Residues 1 to 32 form a disordered region; it reads MAELDPFGAPAGAPGGPALGNGVAGAGEEDPA. Positions 13–25 are enriched in gly residues; sequence APGGPALGNGVAG. An involved in binding clathrin heavy chain region spans residues 99–161; the sequence is VDRLQSEPES…QLQKTKANNR (63 aa). Phosphoserine occurs at positions 104 and 193. Position 210 is an N6-acetyllysine (Lys-210). The residue at position 223 (Ser-223) is a Phosphoserine. Lys-229 is modified (N6-acetyllysine).

This sequence belongs to the clathrin light chain family. As to quaternary structure, clathrin coats are formed from molecules containing 3 heavy chains and 3 light chains. Interacts with CALY; the interaction stimulates clathrin self-assembly and clathrin-mediated endocytosis. Interacts with CKAP5 and TACC3 forming the TACC3/ch-TOG/clathrin complex located at spindle inter-microtubules bridges; the complex implicates clathrin triskelions.

The protein resides in the cytoplasmic vesicle membrane. The protein localises to the membrane. It is found in the coated pit. It localises to the cytoplasm. Its subcellular location is the cytoskeleton. The protein resides in the spindle. In terms of biological role, clathrin is the major protein of the polyhedral coat of coated pits and vesicles. Acts as a component of the TACC3/ch-TOG/clathrin complex proposed to contribute to stabilization of kinetochore fibers of the mitotic spindle by acting as inter-microtubule bridge. The protein is Clathrin light chain A (Clta) of Mus musculus (Mouse).